Consider the following 407-residue polypeptide: D-inositol 3-phosphate glycosyltransferase (407 aa).

Histidine 2 serves as a coordination point for 1D-myo-inositol 3-phosphate. UDP-N-acetyl-alpha-D-glucosamine is bound by residues 8-9 (QP) and glycine 16. 1D-myo-inositol 3-phosphate-binding positions include 13–18 (DAGGLN), arginine 71, tyrosine 104, threonine 128, and arginine 148. Arginine 222 and lysine 227 together coordinate UDP-N-acetyl-alpha-D-glucosamine. Mg(2+)-binding residues include tyrosine 297, arginine 298, and alanine 300. UDP-N-acetyl-alpha-D-glucosamine contacts are provided by glutamate 310 and glutamate 318. Residue threonine 324 participates in Mg(2+) binding.

It belongs to the glycosyltransferase group 1 family. MshA subfamily. As to quaternary structure, homodimer.

It catalyses the reaction 1D-myo-inositol 3-phosphate + UDP-N-acetyl-alpha-D-glucosamine = 1D-myo-inositol 2-acetamido-2-deoxy-alpha-D-glucopyranoside 3-phosphate + UDP + H(+). Its function is as follows. Catalyzes the transfer of a N-acetyl-glucosamine moiety to 1D-myo-inositol 3-phosphate to produce 1D-myo-inositol 2-acetamido-2-deoxy-glucopyranoside 3-phosphate in the mycothiol biosynthesis pathway. The sequence is that of D-inositol 3-phosphate glycosyltransferase from Frankia alni (strain DSM 45986 / CECT 9034 / ACN14a).